The chain runs to 701 residues: Translation initiation factor IF-2 (701 aa).

A compositionally biased stretch (basic and acidic residues) spans 48–62; that stretch reads KIYKPEKAEQSEKSQ. The disordered stretch occupies residues 48–123; that stretch reads KIYKPEKAEQ…EPKEMPSKIT (76 aa). Low complexity-rich tracts occupy residues 63–89 and 97–109; these read QKNT…NNKP and NNKN…NNKQ. Positions 110-119 are enriched in basic and acidic residues; it reads PKQEEPKEMP. Residues 203–372 enclose the tr-type G domain; the sequence is ERPAVVTIMG…VLTSEVQELK (170 aa). The tract at residues 212–219 is G1; the sequence is GHVDHGKT. 212-219 serves as a coordination point for GTP; it reads GHVDHGKT. The tract at residues 237 to 241 is G2; the sequence is GITQH. The segment at 258–261 is G3; sequence DTPG. Residues 258–262 and 312–315 contribute to the GTP site; these read DTPGH and NKID. The tract at residues 312 to 315 is G4; sequence NKID. A G5 region spans residues 348-350; it reads SAL.

It belongs to the TRAFAC class translation factor GTPase superfamily. Classic translation factor GTPase family. IF-2 subfamily.

It localises to the cytoplasm. Functionally, one of the essential components for the initiation of protein synthesis. Protects formylmethionyl-tRNA from spontaneous hydrolysis and promotes its binding to the 30S ribosomal subunits. Also involved in the hydrolysis of GTP during the formation of the 70S ribosomal complex. The chain is Translation initiation factor IF-2 from Staphylococcus saprophyticus subsp. saprophyticus (strain ATCC 15305 / DSM 20229 / NCIMB 8711 / NCTC 7292 / S-41).